The following is a 689-amino-acid chain: Glycine--tRNA ligase beta subunit (689 aa).

It belongs to the class-II aminoacyl-tRNA synthetase family. Tetramer of two alpha and two beta subunits.

The protein localises to the cytoplasm. It carries out the reaction tRNA(Gly) + glycine + ATP = glycyl-tRNA(Gly) + AMP + diphosphate. The chain is Glycine--tRNA ligase beta subunit from Photorhabdus laumondii subsp. laumondii (strain DSM 15139 / CIP 105565 / TT01) (Photorhabdus luminescens subsp. laumondii).